The following is a 120-amino-acid chain: UPF0102 protein PTH_1707 (120 aa).

Belongs to the UPF0102 family.

This is UPF0102 protein PTH_1707 from Pelotomaculum thermopropionicum (strain DSM 13744 / JCM 10971 / SI).